A 54-amino-acid polypeptide reads, in one-letter code: Large ribosomal subunit protein bL32c (54 aa).

Positions 1 to 20 (MAVPKKKMSKSRRNSRKSNW) are disordered.

This sequence belongs to the bacterial ribosomal protein bL32 family.

The protein localises to the plastid. It localises to the chloroplast. This Euglena gracilis protein is Large ribosomal subunit protein bL32c (rpl32).